Reading from the N-terminus, the 196-residue chain is Fucoxanthin-chlorophyll a-c binding protein A, chloroplastic (196 aa).

The transit peptide at 1–31 (MKFAVFASLLASRAAFAPAQQSARTSVATNM) directs the protein to the chloroplast. The next 3 membrane-spanning stretches (helical) occupy residues 73–94 (ICMLAVAGYLTQEAGIRLPGDI), 114–134 (VPGAGIAQIIAFIGFFEIAVM), and 174–196 (GRAAQMGILALMVHEQLGVSILP).

This sequence belongs to the fucoxanthin chlorophyll protein family. As to quaternary structure, the LHC complex of chromophytic algae is composed of fucoxanthin, chlorophyll A and C bound non-covalently by fucoxanthin chlorophyll proteins (FCPs). The ratio of the pigments in LHC; fucoxanthin: chlorophyll C: chlorophyll A; (0.6-1): (0.1-0.3): (1).

The protein resides in the plastid. It is found in the chloroplast thylakoid membrane. In terms of biological role, the light-harvesting complex (LHC) functions as a light receptor, it captures and delivers excitation energy to photosystems with which it is closely associated. Energy is transferred from the carotenoid and chlorophyll C (or B) to chlorophyll A and the photosynthetic reaction centers where it is used to synthesize ATP and reducing power. The sequence is that of Fucoxanthin-chlorophyll a-c binding protein A, chloroplastic (FCPA) from Phaeodactylum tricornutum (Diatom).